Here is a 261-residue protein sequence, read N- to C-terminus: Small ribosomal subunit protein uS2 (261 aa).

Positions 224–261 (GKQGQDDSEDVEKEMADKAAAENDDEESIEEVVEKSED) are disordered. The span at 245 to 254 (ENDDEESIEE) shows a compositional bias: acidic residues.

This sequence belongs to the universal ribosomal protein uS2 family.

This chain is Small ribosomal subunit protein uS2, found in Lactobacillus gasseri (strain ATCC 33323 / DSM 20243 / BCRC 14619 / CIP 102991 / JCM 1131 / KCTC 3163 / NCIMB 11718 / NCTC 13722 / AM63).